The following is a 968-amino-acid chain: Sorting nexin-13 (968 aa).

Residues 97–284 (ANIIDEPLQQ…YVIWMIRDSN (188 aa)) enclose the PXA domain. Positions 373–496 (PLDSILVDNV…RKVYELMLRD (124 aa)) constitute an RGS domain. The 122-residue stretch at 570 to 691 (YADYDPYAVA…DFLENKAYSK (122 aa)) folds into the PX domain. Arg-612, Ser-614, Lys-639, and Arg-653 together coordinate a 1,2-diacyl-sn-glycero-3-phospho-(1D-myo-inositol-3-phosphate).

It belongs to the sorting nexin family.

The protein localises to the early endosome membrane. Functionally, may be involved in several stages of intracellular trafficking. May play a role in endosome homeostasis. Acts as a GAP for Galphas. The sequence is that of Sorting nexin-13 (SNX13) from Homo sapiens (Human).